A 62-amino-acid polypeptide reads, in one-letter code: Alpha-lytic protease L1 (62 aa).

Catalysis depends on S48, which acts as the Charge relay system.

It belongs to the peptidase S1 family. As to quaternary structure, monomer.

Its subcellular location is the secreted. The enzyme catalyses Preferential cleavage: Ala-|-Xaa, Val-|-Xaa in bacterial cell walls, elastin and other proteins.. With respect to regulation, inhibited by phenylmethanesulfonyl fluoride (PMSF) and p-chloromercuribenzoate (PCMB). Has bacteriolytic activity. The sequence is that of Alpha-lytic protease L1 from Lysobacter sp. (strain XL1).